Reading from the N-terminus, the 256-residue chain is Small ribosomal subunit protein eS1 (256 aa).

Ala2 carries the post-translational modification N-acetylalanine; partial.

Belongs to the eukaryotic ribosomal protein eS1 family. Component of the small ribosomal subunit. Mature ribosomes consist of a small (40S) and a large (60S) subunit. The 40S subunit contains about 33 different proteins and 1 molecule of RNA (18S). The 60S subunit contains about 49 different proteins and 3 molecules of RNA (25S, 5.8S and 5S).

It is found in the cytoplasm. This is Small ribosomal subunit protein eS1 from Lachancea thermotolerans (strain ATCC 56472 / CBS 6340 / NRRL Y-8284) (Yeast).